Here is a 126-residue protein sequence, read N- to C-terminus: MDNTLKFADSHEWVKDNGDGTVTIGISEHAQELLGDVVFVDLPDTEDEIEAGESFSLVESVKAASDIYAPISGEIVEINEELEDSPELINEEPYEGGWIVKVKMSDASELNNLKDAEEYLSSVEED.

The Lipoyl-binding domain occupies 21-103; it reads TVTIGISEHA…YEGGWIVKVK (83 aa). Residue Lys62 is modified to N6-lipoyllysine.

The protein belongs to the GcvH family. In terms of assembly, the glycine cleavage system is composed of four proteins: P, T, L and H. The cofactor is (R)-lipoate.

Its function is as follows. The glycine cleavage system catalyzes the degradation of glycine. The H protein shuttles the methylamine group of glycine from the P protein to the T protein. This Vibrio atlanticus (strain LGP32) (Vibrio splendidus (strain Mel32)) protein is Glycine cleavage system H protein.